A 30-amino-acid chain; its full sequence is Toxic protein AapA1 (30 aa).

Belongs to the AapA toxin family.

It localises to the cell inner membrane. Its activity is regulated as follows. Transcription of the aapA1 gene generates a full-length transcript whose folding impedes translation. Processing of the 3' end of the aapA1 message generates a shorter transcript that becomes translatable after a structural rearrangement. The processing also makes it more susceptible to forming dsRNA with IsoA1 which leads to duplex RNA degradation by RNase 3 (rnc). Functionally, may be involved in response to oxidative stress. Toxic component of a type I toxin-antitoxin (TA) system. When overexpression is induced in situ in the absence of its cognate antisense RNA antitoxin IsoA1 it leads to cell growth arrest and cell death without lysis. Neutralized by IsoA1 RNA which forms an extensive duplex with the mRNA. Binds artificial prokaryotic and eukaryotic lipid membranes, with 30-fold higher affinity for prokaryotic membranes. Molecular dynamics suggests the peptide penetrates the membrane leading to lipid reorganization and thinning of the bilayer. Induction of toxin in the absence of antitoxin RNA causes a fast conversion of cells from spiral-shaped to coccoid forms; cells have no visible membrane defects and resemble wild-type 'aging coccoids'. Toxin causes a moderate decrease in membrane potential and ATP content and alterations in peptidoglycan muropeptide abundance; GlcNAc-MurNAc dipeptides increase while GlcNAc-MurNAc tripeptides decrease (i.e. a faster phenocopy of cell aging). Deletion of all 6 AapA/IsoA TA loci in strain B128 leads to slower than wild-type conversion of H2O2-treated cells to the coccoid form. This suggests oxidative stress triggers coccoid transformation via these type I TA systems, although other factors eventually drive the morphology change. This is Toxic protein AapA1 from Helicobacter pylori (strain ATCC 700392 / 26695) (Campylobacter pylori).